We begin with the raw amino-acid sequence, 332 residues long: Fructose-1,6-bisphosphatase class 1 (332 aa).

The Mg(2+) site is built by Glu89, Asp110, Leu112, and Asp113. Substrate-binding positions include 113 to 116, Asn206, Tyr239, 257 to 259, and Lys269; these read DGSS and YLY. Glu275 lines the Mg(2+) pocket.

This sequence belongs to the FBPase class 1 family. In terms of assembly, homotetramer. Mg(2+) is required as a cofactor.

The protein resides in the cytoplasm. The catalysed reaction is beta-D-fructose 1,6-bisphosphate + H2O = beta-D-fructose 6-phosphate + phosphate. It functions in the pathway carbohydrate biosynthesis; gluconeogenesis. This Enterobacter sp. (strain 638) protein is Fructose-1,6-bisphosphatase class 1.